A 346-amino-acid polypeptide reads, in one-letter code: Glucose-6-phosphatase 3 (346 aa).

Residues 1-25 (MESTLSAGIMMAEALQNQLPGLENM) are Lumenal-facing. A helical membrane pass occupies residues 26–46 (WLWVTFLADPKNLFQFYFPAV). At 47-56 (YYASRRLGIS) the chain is on the cytoplasmic side. Residues 57-77 (LFWIAFITEWLNLVFKWFLFG) traverse the membrane as a helical segment. Residues 78–115 (DRPFWWVHESGYSAQTPVQIHQFPSSCETGPGSPSGHC) are Lumenal-facing. Arg-79 lines the substrate pocket. His-114 (proton donor) is an active-site residue. The helical transmembrane segment at 116–135 (MITGAALWPVMIAISSQVAS) threads the bilayer. Over 136–140 (QTRSP) the chain is Cytoplasmic. Residues 141 to 162 (WVRVIPGLAYCTFLLAVGLSRV) traverse the membrane as a helical segment. Substrate is bound at residue Arg-161. Residues 163–167 (FLLAH) lie on the Lumenal side of the membrane. The Nucleophile role is filled by His-167. A helical membrane pass occupies residues 168–186 (FPHQVLAGLLAGVILGWLL). Residues 187–197 (SPRVPMERELS) lie on the Cytoplasmic side of the membrane. A helical transmembrane segment spans residues 198-218 (FYGLTALTLMLGASLMYWTLF). Residues 219–254 (TLGLDLSWSINLASKWCDRPEWVLVDSRPFASLSRD) are Lumenal-facing. The chain crosses the membrane as a helical span at residues 255 to 273 (SGSALGLGIALHTPCYAQI). Residues 274–283 (RRVHLGNGQK) are Cytoplasmic-facing. Residues 284 to 304 (IACFVLAMGLLVFLEWLGHPP) traverse the membrane as a helical segment. Residues 305 to 307 (QIS) are Lumenal-facing. A helical membrane pass occupies residues 308-328 (LFYIFNFLKFTLWPCLVVALV). The Cytoplasmic segment spans residues 329-346 (PWMVHTLSAQEAPPIRSS).

Belongs to the glucose-6-phosphatase family. As to expression, expressed in liver and kidney. It is the major glucose-6-phosphatase expressed in the small intestine.

The protein resides in the endoplasmic reticulum membrane. The enzyme catalyses D-glucose 6-phosphate + H2O = D-glucose + phosphate. It participates in carbohydrate biosynthesis; gluconeogenesis. With respect to regulation, inhibited by vanadate. Its function is as follows. Hydrolyzes glucose-6-phosphate to glucose in the endoplasmic reticulum. May form with the glucose-6-phosphate transporter (SLC37A4/G6PT) a ubiquitously expressed complex responsible for glucose production through glycogenolysis and gluconeogenesis. Probably required for normal neutrophil function. The sequence is that of Glucose-6-phosphatase 3 (G6pc3) from Rattus norvegicus (Rat).